Reading from the N-terminus, the 192-residue chain is uncharacterized protein (192 aa).

Residues 29-160 (QRQAAVLVPI…PLDIERKQQR (132 aa)) form the Nudix hydrolase domain. The short motif at 67–89 (GAADKTDRSIIETALREAQEEVA) is the Nudix box element. Mg(2+) is bound by residues Glu-83 and Glu-87.

Belongs to the Nudix hydrolase family. PCD1 subfamily. Mn(2+) is required as a cofactor. Mg(2+) serves as cofactor.

Probably mediates the hydrolysis of some nucleoside diphosphate derivatives. This is an uncharacterized protein from Pectobacterium atrosepticum (strain SCRI 1043 / ATCC BAA-672) (Erwinia carotovora subsp. atroseptica).